A 539-amino-acid polypeptide reads, in one-letter code: NADH-quinone oxidoreductase subunit N 2 (539 aa).

The next 13 helical transmembrane spans lie at 11–31 (LIPE…DVLT), 52–72 (LMGL…FSWM), 106–126 (PLTH…VILT), 141–161 (LILF…LIMI), 193–213 (YIFG…LLGL), 248–268 (GVAI…VAIV), 296–316 (AGFF…SILG), 329–349 (WTSL…LAAL), 357–377 (MLAY…VGTQ), 385–405 (LMYL…LALV), 429–449 (LLLT…GFFV), 462–484 (AKWL…LRFL), and 500–520 (VGFG…GLGI).

The protein belongs to the complex I subunit 2 family. NDH-1 is composed of 14 different subunits. Subunits NuoA, H, J, K, L, M, N constitute the membrane sector of the complex.

The protein localises to the cell membrane. The enzyme catalyses a quinone + NADH + 5 H(+)(in) = a quinol + NAD(+) + 4 H(+)(out). In terms of biological role, NDH-1 shuttles electrons from NADH, via FMN and iron-sulfur (Fe-S) centers, to quinones in the respiratory chain. The immediate electron acceptor for the enzyme in this species is believed to be ubiquinone. Couples the redox reaction to proton translocation (for every two electrons transferred, four hydrogen ions are translocated across the cytoplasmic membrane), and thus conserves the redox energy in a proton gradient. The polypeptide is NADH-quinone oxidoreductase subunit N 2 (Herpetosiphon aurantiacus (strain ATCC 23779 / DSM 785 / 114-95)).